Consider the following 116-residue polypeptide: Large ribosomal subunit protein bL19 (116 aa).

The protein belongs to the bacterial ribosomal protein bL19 family.

In terms of biological role, this protein is located at the 30S-50S ribosomal subunit interface and may play a role in the structure and function of the aminoacyl-tRNA binding site. This chain is Large ribosomal subunit protein bL19, found in Haemophilus influenzae (strain 86-028NP).